We begin with the raw amino-acid sequence, 153 residues long: Ribosome maturation factor RimP (153 aa).

The protein belongs to the RimP family.

The protein resides in the cytoplasm. Required for maturation of 30S ribosomal subunits. This chain is Ribosome maturation factor RimP, found in Psychromonas ingrahamii (strain DSM 17664 / CCUG 51855 / 37).